The primary structure comprises 313 residues: Acetaldehyde dehydrogenase (313 aa).

NAD(+) is bound at residue 15–18; sequence SGNI. Cysteine 133 (acyl-thioester intermediate) is an active-site residue. NAD(+) contacts are provided by residues 164–172 and asparagine 289; that span reads SAGPGTRAN.

Belongs to the acetaldehyde dehydrogenase family.

The enzyme catalyses acetaldehyde + NAD(+) + CoA = acetyl-CoA + NADH + H(+). The sequence is that of Acetaldehyde dehydrogenase from Rhizobium rhizogenes (strain K84 / ATCC BAA-868) (Agrobacterium radiobacter).